The sequence spans 319 residues: MKRIGVLTSGGDSPGMNAAIRAVVRKAIYHGVEVYGIYQGYAGLISGDIRKMELGSVGDIIHRGGTILYTARCEEFKTLEGQKKGIEQLKKFGIEGLVVIGGDGSFAGAQKLTEHGFPTVGVPGTIDNDIPGTDFTIGFDTALNTVIDAIDKIRDTATSHDRTYVIEVMGRNAGDLALWSGLADGAETIVIPEADHDIDQIISRLQRGQERGKKHSIIVVAEGVGSGMDFGREISERTGAETRVTVLGHIQRGGSPTGFDRVLASRLGAKAVDLLLEGQAGVTVGIENNKLVHHDITEVLQRKHSIDLDMYRLSQELSI.

Gly-11 lines the ATP pocket. An ADP-binding site is contributed by 21 to 25 (RAVVR). ATP is bound by residues 72–73 (RC) and 102–105 (GDGS). Asp-103 contributes to the Mg(2+) binding site. 125–127 (TID) contributes to the substrate binding site. Catalysis depends on Asp-127, which acts as the Proton acceptor. Residue Arg-154 coordinates ADP. Substrate-binding positions include Arg-162 and 169–171 (MGR). Residues 185 to 187 (GAE), Arg-211, and 213 to 215 (KKH) each bind ADP. Substrate-binding positions include Glu-222, Arg-243, and 249-252 (HIQR).

Belongs to the phosphofructokinase type A (PFKA) family. ATP-dependent PFK group I subfamily. Prokaryotic clade 'B1' sub-subfamily. Homotetramer. The cofactor is Mg(2+).

It is found in the cytoplasm. It carries out the reaction beta-D-fructose 6-phosphate + ATP = beta-D-fructose 1,6-bisphosphate + ADP + H(+). It participates in carbohydrate degradation; glycolysis; D-glyceraldehyde 3-phosphate and glycerone phosphate from D-glucose: step 3/4. Allosterically activated by ADP and other diphosphonucleosides, and allosterically inhibited by phosphoenolpyruvate. Functionally, catalyzes the phosphorylation of D-fructose 6-phosphate to fructose 1,6-bisphosphate by ATP, the first committing step of glycolysis. In Halalkalibacterium halodurans (strain ATCC BAA-125 / DSM 18197 / FERM 7344 / JCM 9153 / C-125) (Bacillus halodurans), this protein is ATP-dependent 6-phosphofructokinase.